The chain runs to 432 residues: Methylenetetrahydrofolate--tRNA-(uracil-5-)-methyltransferase TrmFO (432 aa).

FAD is bound at residue Gly7–Gly12.

This sequence belongs to the MnmG family. TrmFO subfamily. FAD is required as a cofactor.

Its subcellular location is the cytoplasm. The enzyme catalyses uridine(54) in tRNA + (6R)-5,10-methylene-5,6,7,8-tetrahydrofolate + NADH + H(+) = 5-methyluridine(54) in tRNA + (6S)-5,6,7,8-tetrahydrofolate + NAD(+). The catalysed reaction is uridine(54) in tRNA + (6R)-5,10-methylene-5,6,7,8-tetrahydrofolate + NADPH + H(+) = 5-methyluridine(54) in tRNA + (6S)-5,6,7,8-tetrahydrofolate + NADP(+). Its function is as follows. Catalyzes the folate-dependent formation of 5-methyl-uridine at position 54 (M-5-U54) in all tRNAs. The sequence is that of Methylenetetrahydrofolate--tRNA-(uracil-5-)-methyltransferase TrmFO from Anoxybacillus flavithermus (strain DSM 21510 / WK1).